Reading from the N-terminus, the 485-residue chain is MGFEIAKTNSILSKLATNEEHGENSPYFDGWKAYDSDPFHPLKNPNGVIQMGLAENQLCLDLIEDWIKRNPKGSICSEGIKSFKAIANFQDYHGLPEFRKAIAKFMEKTRGGRVRFDPERVVMAGGATGANETIIFCLADPGDAFLVPSPYYPAFNRDLRWRTGVQLIPIHCESSNNFKITSKAVKEAYENAQKSNIKVKGLILTNPSNPLGTTLDKDTLKSVLSFTNQHNIHLVCDEIYAATVFDTPQFVSIAEILDEQEMTYCNKDLVHIVYSLSKDMGLPGFRVGIIYSFNDDVVNCARKMSSFGLVSTQTQYFLAAMLSDEKFVDNFLRESAMRLGKRHKHFTNGLEVVGIKCLKNNAGLFCWMDLRPLLRESTFDSEMSLWRVIINDVKLNVSPGSSFECQEPGWFRVCFANMDDGTVDIALARIRRFVGVEKSGDKSSSMEKKQQWKKNNLRLSFSKRMYDESVLSPLSSPIPPSPLVR.

Glutamate 55 and tyrosine 92 together coordinate substrate. N6-(pyridoxal phosphate)lysine is present on lysine 278. Serine 460 is modified (phosphoserine).

The protein belongs to the class-I pyridoxal-phosphate-dependent aminotransferase family. Homodimer and heterodimer. In vivo, the relevance of heterodimerization with other ACS enzymes is however unsure. It depends on pyridoxal 5'-phosphate as a cofactor. In terms of processing, phosphorylated on Ser 460; phosphorylation may regulate its turnover. Post-translationally, may be processed at its C-terminus.

The enzyme catalyses S-adenosyl-L-methionine = 1-aminocyclopropane-1-carboxylate + S-methyl-5'-thioadenosine + H(+). The protein operates within alkene biosynthesis; ethylene biosynthesis via S-adenosyl-L-methionine; ethylene from S-adenosyl-L-methionine: step 1/2. Its function is as follows. 1-aminocyclopropane-1-carboxylate synthase (ACS) enzymes catalyze the conversion of S-adenosyl-L-methionine (SAM) into 1-aminocyclopropane-1-carboxylate (ACC), a direct precursor of ethylene. This chain is 1-aminocyclopropane-1-carboxylate synthase 2 (ACS2), found in Solanum lycopersicum (Tomato).